A 136-amino-acid polypeptide reads, in one-letter code: Globin CTP-III (136 aa).

The 136-residue stretch at 1–136 (LSADQISTVQ…TFFGMIFSKM (136 aa)) folds into the Globin domain. H87 serves as a coordination point for heme b.

It belongs to the globin family. Monomer.

The chain is Globin CTP-III from Chironomus thummi piger (Midge).